The sequence spans 525 residues: GMP synthase [glutamine-hydrolyzing] (525 aa).

Positions 9–207 (RILILDFGSQ…VKEICHCEAL (199 aa)) constitute a Glutamine amidotransferase type-1 domain. Cys86 functions as the Nucleophile in the catalytic mechanism. Active-site residues include His181 and Glu183. The GMPS ATP-PPase domain occupies 208-400 (WTPATIIEDA…LGLPYNMLYR (193 aa)). 235 to 241 (SGGVDSS) provides a ligand contact to ATP.

In terms of assembly, homodimer.

The catalysed reaction is XMP + L-glutamine + ATP + H2O = GMP + L-glutamate + AMP + diphosphate + 2 H(+). It functions in the pathway purine metabolism; GMP biosynthesis; GMP from XMP (L-Gln route): step 1/1. In terms of biological role, catalyzes the synthesis of GMP from XMP. This chain is GMP synthase [glutamine-hydrolyzing], found in Tolumonas auensis (strain DSM 9187 / NBRC 110442 / TA 4).